The chain runs to 714 residues: Neutral ceramidase A (714 aa).

The signal sequence occupies residues 1–23 (MKRSIVFIYSLVILLLSVGFIDA). N-linked (GlcNAc...) asparagine glycans are attached at residues Asn-218 and Asn-246. Catalysis depends on Ser-293, which acts as the Nucleophile. Asn-353, Asn-373, Asn-416, Asn-571, Asn-610, and Asn-700 each carry an N-linked (GlcNAc...) asparagine glycan.

It belongs to the neutral ceramidase family.

It is found in the secreted. The enzyme catalyses an N-acylsphing-4-enine + H2O = sphing-4-enine + a fatty acid. Its function is as follows. Hydrolyzes the sphingolipid ceramide into sphingosine and free fatty acid at an optimal pH of 3.0. Has no activity toward glycosphingolipids, such as GalCer and Galbeta1-3GalNAcbeta1-4(NeuAcalpha2-3)Galbeta1-4Glcbeta1-1'Cer or sphingomyelin. The protein is Neutral ceramidase A (dcd2A) of Dictyostelium discoideum (Social amoeba).